The following is a 151-amino-acid chain: Probable cellulase Cel12b (151 aa).

Residues Glu-50 and Glu-133 contribute to the active site.

It belongs to the glycosyl hydrolase 12 (cellulase H) family.

Probable cellulase. Can hydrolyze barley beta-glucan in vitro. Could be important for the survival of M.tuberculosis in the environment, perhaps in amoebal hosts. This chain is Probable cellulase Cel12b, found in Mycobacterium tuberculosis (strain ATCC 25618 / H37Rv).